Here is a 118-residue protein sequence, read N- to C-terminus: Non-specific lipid-transfer protein A (118 aa).

The first 25 residues, M1–R25, serve as a signal peptide directing secretion. 4 cysteine pairs are disulfide-bonded: C29–C76, C39–C53, C54–C100, and C74–C114.

The protein belongs to the plant LTP family.

Plant non-specific lipid-transfer proteins transfer phospholipids as well as galactolipids across membranes. May play a role in wax or cutin deposition in the cell walls of expanding epidermal cells and certain secretory tissues. This chain is Non-specific lipid-transfer protein A (WAX9A), found in Brassica oleracea var. italica (Broccoli).